The primary structure comprises 580 residues: Isocitrate lyase (580 aa).

106–108 (SGW) contributes to the substrate binding site. A Mg(2+)-binding site is contributed by D177. C215 acts as the Proton acceptor in catalysis. Substrate contacts are provided by residues 216–217 (GH), R252, 441–445 (NLSPS), and T476. A Microbody targeting signal motif is present at residues 578–580 (SRM).

Belongs to the isocitrate lyase/PEP mutase superfamily. Isocitrate lyase family. As to quaternary structure, homotetramer. Requires Mg(2+) as cofactor.

It is found in the glyoxysome. The enzyme catalyses D-threo-isocitrate = glyoxylate + succinate. Its pathway is carbohydrate metabolism; glyoxylate cycle; (S)-malate from isocitrate: step 1/2. Its function is as follows. Involved in storage lipid mobilization during the growth of higher plant seedling. This is Isocitrate lyase (ICL 8) from Pinus taeda (Loblolly pine).